The primary structure comprises 191 residues: MAP6 domain-containing protein 1 (191 aa).

3 S-palmitoyl cysteine lipidation sites follow: Cys5, Cys10, and Cys11. The disordered stretch occupies residues His31–Arg106. 2 positions are modified to phosphoserine: Ser38 and Ser41. 2 mn regions span residues Thr123–Val136 and Asp158–Val170. Phosphoserine is present on Ser160.

The protein belongs to the STOP family. As to quaternary structure, interacts with calmodulin. In terms of processing, palmitoylated. Palmitoylation enhances association with microtubules. Expressed in brain. Found in neurons in primary cultures, but absent in glial cells.

The protein localises to the golgi apparatus. Its subcellular location is the cytoplasm. It localises to the cytoskeleton. Functionally, may have microtubule-stabilizing activity. This Mus musculus (Mouse) protein is MAP6 domain-containing protein 1 (Map6d1).